Reading from the N-terminus, the 266-residue chain is Ribosomal RNA small subunit methyltransferase A (266 aa).

S-adenosyl-L-methionine-binding residues include N10, I12, G37, E58, D82, and N105.

Belongs to the class I-like SAM-binding methyltransferase superfamily. rRNA adenine N(6)-methyltransferase family. RsmA subfamily.

It localises to the cytoplasm. The catalysed reaction is adenosine(1518)/adenosine(1519) in 16S rRNA + 4 S-adenosyl-L-methionine = N(6)-dimethyladenosine(1518)/N(6)-dimethyladenosine(1519) in 16S rRNA + 4 S-adenosyl-L-homocysteine + 4 H(+). In terms of biological role, specifically dimethylates two adjacent adenosines (A1518 and A1519) in the loop of a conserved hairpin near the 3'-end of 16S rRNA in the 30S particle. May play a critical role in biogenesis of 30S subunits. The protein is Ribosomal RNA small subunit methyltransferase A of Mycoplasma capricolum subsp. capricolum (strain California kid / ATCC 27343 / NCTC 10154).